Reading from the N-terminus, the 854-residue chain is Leucine--tRNA ligase (854 aa).

Residues 1 to 32 (MARRDMAAETMDPRASTEPSPNEPREPARYDH) form a disordered region. The span at 23 to 32 (EPREPARYDH) shows a compositional bias: basic and acidic residues. The 'HIGH' region motif lies at 69-80 (PYPSGSGLHVGH). Residues 633-637 (KMSKS) carry the 'KMSKS' region motif. Position 636 (K636) interacts with ATP.

Belongs to the class-I aminoacyl-tRNA synthetase family.

It localises to the cytoplasm. The enzyme catalyses tRNA(Leu) + L-leucine + ATP = L-leucyl-tRNA(Leu) + AMP + diphosphate. This is Leucine--tRNA ligase from Sorangium cellulosum (strain So ce56) (Polyangium cellulosum (strain So ce56)).